Consider the following 236-residue polypeptide: MDFHVMTLFPDMIMDGLNTSITGRAIKSGVMSVTAHDIRDYSNDKHLKVDDYPYGGGAGMVMRAAPVCDCYEDIVKNIGKRPRVIYMTPQGYTFTQKMAEDFAKEDNLVILCGHYEGIDERALENIVTDYVSIGDYVLTGGELPAMVVIDTISRLVPGVLNNEESAETESFSDGLLEYPQYTRPADYNGQLVPEVLLSGHHANIEKWRHEKSIERTKKYRPDLYEEYVKKHSDEFR.

Residues glycine 113 and 133–138 (IGDYVL) contribute to the S-adenosyl-L-methionine site.

It belongs to the RNA methyltransferase TrmD family. As to quaternary structure, homodimer.

It is found in the cytoplasm. The catalysed reaction is guanosine(37) in tRNA + S-adenosyl-L-methionine = N(1)-methylguanosine(37) in tRNA + S-adenosyl-L-homocysteine + H(+). Its function is as follows. Specifically methylates guanosine-37 in various tRNAs. This chain is tRNA (guanine-N(1)-)-methyltransferase, found in Lachnospira eligens (strain ATCC 27750 / DSM 3376 / VPI C15-48 / C15-B4) (Eubacterium eligens).